Here is a 339-residue protein sequence, read N- to C-terminus: DNA-directed RNA polymerase subunit alpha (339 aa).

The segment at 1 to 233 (MVREEITGST…DLFLPFIHTE (233 aa)) is alpha N-terminal domain (alpha-NTD). An alpha C-terminal domain (alpha-CTD) region spans residues 266–339 (GIPLNCIFID…IDLPKNKFSL (74 aa)).

The protein belongs to the RNA polymerase alpha chain family. As to quaternary structure, in plastids the minimal PEP RNA polymerase catalytic core is composed of four subunits: alpha, beta, beta', and beta''. When a (nuclear-encoded) sigma factor is associated with the core the holoenzyme is formed, which can initiate transcription.

Its subcellular location is the plastid. The protein resides in the chloroplast. It catalyses the reaction RNA(n) + a ribonucleoside 5'-triphosphate = RNA(n+1) + diphosphate. Functionally, DNA-dependent RNA polymerase catalyzes the transcription of DNA into RNA using the four ribonucleoside triphosphates as substrates. In Saccharum hybrid (Sugarcane), this protein is DNA-directed RNA polymerase subunit alpha.